A 177-amino-acid chain; its full sequence is MAESLEQQLRALVRDVPDFPKPGILFRDLTPVMRDPQAWKQVMEGMQQSLAGLQPEVIVGIEARGFIVGTSLAMTMGLGFVPVRKPGKLPGPITAVDYALEYGSDRLEIQEGALSGCQRVLVVDDLLATGGTAAACAELVSRAGGAVCGYGFVAELTALGGRSKLPGGVLVESLIHY.

This sequence belongs to the purine/pyrimidine phosphoribosyltransferase family. As to quaternary structure, homodimer.

Its subcellular location is the cytoplasm. It catalyses the reaction AMP + diphosphate = 5-phospho-alpha-D-ribose 1-diphosphate + adenine. The protein operates within purine metabolism; AMP biosynthesis via salvage pathway; AMP from adenine: step 1/1. Catalyzes a salvage reaction resulting in the formation of AMP, that is energically less costly than de novo synthesis. The polypeptide is Adenine phosphoribosyltransferase (Synechococcus sp. (strain RCC307)).